Consider the following 732-residue polypeptide: MQLIYQCAWIVPLCPLISSILIGLGLLFFEKSTKSIRRICAISCILSLSVATVICYNLSYEQIIDNSIYQYSWSWISNGDIVLEFGYLIDPLTCIMLVLVTSVAIIVMIYSDGYMSHDEGYVRFFVYLSLFTASMLGLVLSPNLIQIYIFWELVGMCSYLLIGFWFTRPSAANACQKAFITNRIGDFGLLLGILGFYWITGSFEFENLFKGFKDLLINNEVSPFFAILCASFLFLGPVAKSAQFPLHVWLPDAMEGPTPISALIHAATMVAAGIYLVARMFPLFETLPFVMSVISWTGAVTALLGATLAFFQKDLKRGLAYSTMSQLGYMMLALGIGSYRAGLFHLITHAYSKALLFLGSGSVIHSMEPIVGYRPDESQNMIFMGGLRKHMPITGTTFLLGTLSLCGIPPFACFWSKDEIIADSWLYSPFIGWIALLTAGLTSFYMFRIYFLTFEGEFRANSFKENTPVSSVSLWGEFRFEEFGEKKADSVLQIVEKSSPKEFFRFVQSNRESSETQIGNYLSAYPSKEPIHFLYPKESDYTMLIPLLILSIPTLLIGFIGAPLPNGQLGSDLLSHWLNSFGNLSPERLSENWLEFIEDAITSISIASFGIFSAFILYGPASIFPRDLEKKIEPQLKGVWGFFINYMYNWSQYRGYIDQYYNKIFVEGTRILAYASSFFDRWIIDGIVNGTGISSFSGGEGMRYGEGGRVSSYLFGLVFGMTILLAVILLII.

16 consecutive transmembrane segments (helical) span residues 9–29 (WIVP…LLFF), 39–59 (ICAI…YNLS), 89–109 (IDPL…IVMI), 125–145 (FVYL…PNLI), 147–167 (IYIF…FWFT), 184–204 (IGDF…GSFE), 215–235 (LLIN…FLFL), 258–278 (TPIS…YLVA), 291–311 (MSVI…LAFF), 327–347 (LGYM…FHLI), 353–373 (KALL…IVGY), 395–415 (GTTF…ACFW), 420–440 (IIAD…LTAG), 544–564 (LIPL…GAPL), 604–624 (ISIA…ASIF), and 712–732 (SYLF…LLII).

The protein belongs to the complex I subunit 5 family. As to quaternary structure, NDH is composed of at least 16 different subunits, 5 of which are encoded in the nucleus.

Its subcellular location is the plastid. It is found in the chloroplast thylakoid membrane. The catalysed reaction is a plastoquinone + NADH + (n+1) H(+)(in) = a plastoquinol + NAD(+) + n H(+)(out). The enzyme catalyses a plastoquinone + NADPH + (n+1) H(+)(in) = a plastoquinol + NADP(+) + n H(+)(out). NDH shuttles electrons from NAD(P)H:plastoquinone, via FMN and iron-sulfur (Fe-S) centers, to quinones in the photosynthetic chain and possibly in a chloroplast respiratory chain. The immediate electron acceptor for the enzyme in this species is believed to be plastoquinone. Couples the redox reaction to proton translocation, and thus conserves the redox energy in a proton gradient. The polypeptide is NAD(P)H-quinone oxidoreductase subunit 5, chloroplastic (ndhF) (Anthoceros angustus (Hornwort)).